Consider the following 602-residue polypeptide: T-box transcription factor TBX15 (602 aa).

Positions 46–84 (ALSPAGPLGDTEDAAAHGLEPHPDSEQSTGSDSEVLTER) are disordered. The segment covering 71 to 84 (EQSTGSDSEVLTER) has biased composition (polar residues). The segment at residues 122-304 (LWKRFHDIGT…RNPFAKGFRD (183 aa)) is a DNA-binding region (T-box). The residue at position 330 (Thr330) is a Phosphothreonine. Disordered regions lie at residues 338–369 (QKQQGGSTGTSPTTSSTGTPSPSASSHLLSPS) and 425–447 (QSGTTSATQPSETFMPQRTPSLI). Residues 346–369 (GTSPTTSSTGTPSPSASSHLLSPS) show a composition bias toward low complexity. The span at 425 to 446 (QSGTTSATQPSETFMPQRTPSL) shows a compositional bias: polar residues.

As to quaternary structure, can form a heterodimer with TBX18.

Its subcellular location is the nucleus. Its function is as follows. Probable transcriptional regulator involved in the development of the skeleton of the limb, vertebral column and head. Acts by controlling the number of mesenchymal precursor cells and chondrocytes. This is T-box transcription factor TBX15 (TBX15) from Homo sapiens (Human).